Consider the following 290-residue polypeptide: AA9 family lytic polysaccharide monooxygenase A (290 aa).

Positions 1-17 (MKLSLLASVALVPFVSA) are cleaved as a signal peptide. Cu(2+) is bound by residues His18 and His101. Cys67 and Cys189 are joined by a disulfide. His176 contacts O2. Residue Tyr187 participates in Cu(2+) binding. Residues Asn220 and Asn254 are each glycosylated (N-linked (GlcNAc...) asparagine). The interval 240–290 (GGSGSGSSSYSKVANVTSSDESSQSGASSSQGTVSTCPNKYNRRHARQFKP) is disordered. The span at 245–275 (GSSSYSKVANVTSSDESSQSGASSSQGTVST) shows a compositional bias: low complexity. Basic residues predominate over residues 280–290 (YNRRHARQFKP).

It belongs to the polysaccharide monooxygenase AA9 family. Cu(2+) serves as cofactor.

It localises to the secreted. It carries out the reaction [(1-&gt;4)-beta-D-glucosyl]n+m + reduced acceptor + O2 = 4-dehydro-beta-D-glucosyl-[(1-&gt;4)-beta-D-glucosyl]n-1 + [(1-&gt;4)-beta-D-glucosyl]m + acceptor + H2O.. In terms of biological role, lytic polysaccharide monooxygenase (LPMO) that depolymerizes crystalline and amorphous polysaccharides via the oxidation of scissile alpha- or beta-(1-4)-glycosidic bonds, yielding exclusively C1 oxidation products. Catalysis by LPMOs requires the reduction of the active-site copper from Cu(II) to Cu(I) by a reducing agent and H(2)O(2) or O(2) as a cosubstrate. This is AA9 family lytic polysaccharide monooxygenase A from Aspergillus fumigatus (strain ATCC MYA-4609 / CBS 101355 / FGSC A1100 / Af293) (Neosartorya fumigata).